The sequence spans 452 residues: Cobyrinate a,c-diamide synthase (452 aa).

Residues 248-441 (RVAYALDAAF…LHIHFYQNPA (194 aa)) form the GATase cobBQ-type domain. Cys330 (nucleophile) is an active-site residue.

The protein belongs to the CobB/CbiA family. Mg(2+) serves as cofactor.

It carries out the reaction cob(II)yrinate + 2 L-glutamine + 2 ATP + 2 H2O = cob(II)yrinate a,c diamide + 2 L-glutamate + 2 ADP + 2 phosphate + 2 H(+). It participates in cofactor biosynthesis; adenosylcobalamin biosynthesis; cob(II)yrinate a,c-diamide from sirohydrochlorin (anaerobic route): step 10/10. Catalyzes the ATP-dependent amidation of the two carboxylate groups at positions a and c of cobyrinate, using either L-glutamine or ammonia as the nitrogen source. The protein is Cobyrinate a,c-diamide synthase of Listeria innocua serovar 6a (strain ATCC BAA-680 / CLIP 11262).